The chain runs to 66 residues: DNA-directed RNA polymerase subunit omega (66 aa).

It belongs to the RNA polymerase subunit omega family. In terms of assembly, the RNAP catalytic core consists of 2 alpha, 1 beta, 1 beta' and 1 omega subunit. When a sigma factor is associated with the core the holoenzyme is formed, which can initiate transcription.

The catalysed reaction is RNA(n) + a ribonucleoside 5'-triphosphate = RNA(n+1) + diphosphate. Functionally, promotes RNA polymerase assembly. Latches the N- and C-terminal regions of the beta' subunit thereby facilitating its interaction with the beta and alpha subunits. The polypeptide is DNA-directed RNA polymerase subunit omega (Clostridium botulinum (strain Eklund 17B / Type B)).